The chain runs to 282 residues: Protoheme IX farnesyltransferase (282 aa).

9 helical membrane-spanning segments follow: residues 9 to 29 (LAKP…FLLA), 39 to 59 (LPLF…GCVF), 79 to 99 (LVTG…LLIL), 102 to 122 (LVLY…GFIV), 139 to 159 (VLGG…VVNI), 165 to 185 (LALF…IAML), 210 to 230 (IMLF…VLGS), 231 to 251 (ADLF…YKSI), and 261 to 281 (VFAK…CLTM).

It belongs to the UbiA prenyltransferase family. Protoheme IX farnesyltransferase subfamily.

The protein resides in the cell inner membrane. The catalysed reaction is heme b + (2E,6E)-farnesyl diphosphate + H2O = Fe(II)-heme o + diphosphate. It participates in porphyrin-containing compound metabolism; heme O biosynthesis; heme O from protoheme: step 1/1. Its function is as follows. Converts heme B (protoheme IX) to heme O by substitution of the vinyl group on carbon 2 of heme B porphyrin ring with a hydroxyethyl farnesyl side group. The sequence is that of Protoheme IX farnesyltransferase from Francisella tularensis subsp. holarctica (strain LVS).